We begin with the raw amino-acid sequence, 262 residues long: MYIFKIAYDGRLSFQTQPHGETVCDKISNALLDCGYLDNKDRVPLYHGGRTDRGVSALGNYIVYEMDKKPVLPRVQSKLKWDGVWVLGCKEIDTFPEIEYRHYQYNLPNKNHDVELMKKASEKLIGTHYFQNLSKRDKSKVKDPVRTLYNIKISSNDYFITIDIFGESFLWNMVRRIIRLLSDIGKHKIKDPEKFIELILSEDYSKGYPPSPAEGLILVDVKTNIDVDIDSYVLRMLKNSWEKSLNNSLMRLGLCKTVLSKT.

The active-site Nucleophile is aspartate 52. Tyrosine 103 contacts substrate.

It belongs to the tRNA pseudouridine synthase TruA family.

It carries out the reaction uridine(38/39/40) in tRNA = pseudouridine(38/39/40) in tRNA. Formation of pseudouridine at positions 38, 39 and 40 in the anticodon stem and loop of transfer RNAs. The chain is tRNA pseudouridine synthase A from Methanococcus maripaludis (strain C6 / ATCC BAA-1332).